The chain runs to 270 residues: Small ribosomal subunit protein eS1 (270 aa).

2 disordered regions span residues 1-20 (MAVG…SKKK) and 238-270 (GGGK…QESV).

Belongs to the eukaryotic ribosomal protein eS1 family. Component of the small ribosomal subunit. Mature ribosomes consist of a small (40S) and a large (60S) subunit. The 40S subunit contains about 33 different proteins and 1 molecule of RNA (18S). The 60S subunit contains about 49 different proteins and 3 molecules of RNA (28S, 5.8S and 5S).

It is found in the cytoplasm. In Culex quinquefasciatus (Southern house mosquito), this protein is Small ribosomal subunit protein eS1.